A 422-amino-acid chain; its full sequence is MGLSRFNQDATCFVTSSEGNSVTIYNCDPFGKCFEMVDEDTQNIGDDDARGDDNSGGDDDLLVEMLFSTNLVAIVHRKQGILKSKKLKIVNIKRKTIICELSFPHPIQDVVMNRKRVCVLLNSDQIHIYDISCMKHLHTIDIWDSQVKSITGQGVDSLSNSGTSNMTSLRERSSTFSKSISPKICLSNDDRSILAFNCYSTSSKSVILNDVVIFDALNISPLNYINSVHKGNVASLAISPDGKFIATASEKGTLVRIFNTGAETESELLTPLLYEFRRGNRPCNINQLTFNSDSTLLGCVGDSDTIHIFKLDSTSRLLSMSVNSEDNSHITSEDIKALRKDPNSKQFTKLISKTIKKSIPSQALRRDFAHITIKNTKTKHILGFPKEFMNQVYVLSNDGSFFIYSLPSTSGSCVLSKQNDFK.

WD repeat units lie at residues Met-1–Glu-35, Ser-102–Gln-153, Met-166–Val-206, Val-228–Leu-268, Asn-280–Ser-319, and Lys-374–Val-414. The L/FRRG motif signature appears at Phe-276–Asn-280.

Belongs to the WD repeat PROPPIN family.

It localises to the cytoplasm. Its subcellular location is the membrane. It is found in the vacuole membrane. In terms of biological role, required for cytoplasm to vacuole transport (Cvt) vesicles formation and mitophagy. Involved in binding of phosphatidylethanolamine to ATG8 and in recruitment of ATG8 and ATG5 to the pre-autophagosomal structure. Protects ATG8 from ARG4-mediated cleavage. In Vanderwaltozyma polyspora (strain ATCC 22028 / DSM 70294 / BCRC 21397 / CBS 2163 / NBRC 10782 / NRRL Y-8283 / UCD 57-17) (Kluyveromyces polysporus), this protein is Autophagy-related protein 21 (ATG21).